The following is a 363-amino-acid chain: Putative aryl-alcohol dehydrogenase AAD3 (363 aa).

It belongs to the aldo/keto reductase family. Aldo/keto reductase 2 subfamily.

This Saccharomyces cerevisiae (strain ATCC 204508 / S288c) (Baker's yeast) protein is Putative aryl-alcohol dehydrogenase AAD3 (AAD3).